The chain runs to 167 residues: uncharacterized protein (167 aa).

The next 2 helical transmembrane spans lie at 21 to 41 and 87 to 107; these read KIGL…IYKP and MIIT…YVFG. Positions 136 to 159 are enriched in basic and acidic residues; it reads RKQRLKEQREKKEQKKEQKKEKKT. The disordered stretch occupies residues 136 to 167; sequence RKQRLKEQREKKEQKKEQKKEKKTERRKKKKL.

It is found in the membrane. This is an uncharacterized protein from Schizosaccharomyces pombe (strain 972 / ATCC 24843) (Fission yeast).